A 145-amino-acid chain; its full sequence is D-aminoacyl-tRNA deacylase (145 aa).

The short motif at Gly-137 to Pro-138 is the Gly-cisPro motif, important for rejection of L-amino acids element.

The protein belongs to the DTD family. As to quaternary structure, homodimer.

It is found in the cytoplasm. The catalysed reaction is glycyl-tRNA(Ala) + H2O = tRNA(Ala) + glycine + H(+). The enzyme catalyses a D-aminoacyl-tRNA + H2O = a tRNA + a D-alpha-amino acid + H(+). An aminoacyl-tRNA editing enzyme that deacylates mischarged D-aminoacyl-tRNAs. Also deacylates mischarged glycyl-tRNA(Ala), protecting cells against glycine mischarging by AlaRS. Acts via tRNA-based rather than protein-based catalysis; rejects L-amino acids rather than detecting D-amino acids in the active site. By recycling D-aminoacyl-tRNA to D-amino acids and free tRNA molecules, this enzyme counteracts the toxicity associated with the formation of D-aminoacyl-tRNA entities in vivo and helps enforce protein L-homochirality. In Pseudoalteromonas translucida (strain TAC 125), this protein is D-aminoacyl-tRNA deacylase.